The sequence spans 72 residues: UPF0270 protein YheU (72 aa).

The protein belongs to the UPF0270 family.

This Salmonella arizonae (strain ATCC BAA-731 / CDC346-86 / RSK2980) protein is UPF0270 protein YheU.